Consider the following 123-residue polypeptide: Large ribosomal subunit protein bL12 (123 aa).

This sequence belongs to the bacterial ribosomal protein bL12 family. Homodimer. Part of the ribosomal stalk of the 50S ribosomal subunit. Forms a multimeric L10(L12)X complex, where L10 forms an elongated spine to which 2 to 4 L12 dimers bind in a sequential fashion. Binds GTP-bound translation factors.

Forms part of the ribosomal stalk which helps the ribosome interact with GTP-bound translation factors. Is thus essential for accurate translation. This Dechloromonas aromatica (strain RCB) protein is Large ribosomal subunit protein bL12.